The primary structure comprises 186 residues: Ribosome-recycling factor (186 aa).

This sequence belongs to the RRF family.

Its subcellular location is the cytoplasm. Its function is as follows. Responsible for the release of ribosomes from messenger RNA at the termination of protein biosynthesis. May increase the efficiency of translation by recycling ribosomes from one round of translation to another. This chain is Ribosome-recycling factor, found in Leifsonia xyli subsp. xyli (strain CTCB07).